We begin with the raw amino-acid sequence, 1122 residues long: AP-4 complex subunit epsilon-1 (1122 aa).

Residue serine 699 is modified to Phosphoserine. Basic and acidic residues-rich tracts occupy residues 714–728 (YLPK…KPEA) and 745–760 (TTRK…STEE). Disordered regions lie at residues 714–760 (YLPK…STEE) and 797–861 (SKLK…AEKL). Positions 726–1122 (PEASHVPAEG…CHCQKVMQTS (397 aa)) are interaction with TEPSIN. Residues 841–853 (ELSSELFRSESLS) show a composition bias toward low complexity. A Phosphoserine modification is found at serine 851.

The protein belongs to the adaptor complexes large subunit family. As to quaternary structure, adaptor protein complex 4 (AP-4) is a heterotetramer composed of two large adaptins (epsilon-type subunit AP4E1 and beta-type subunit AP4B1), a medium adaptin (mu-type subunit AP4M1) and a small adaptin (sigma-type AP4S1). Interacts with TEPSIN. Interacts with GRIA2; probably indirect it mediates the somatodendritic localization of GRIA2 in neurons.

The protein resides in the golgi apparatus. Its subcellular location is the trans-Golgi network membrane. Its function is as follows. Component of the adaptor protein complex 4 (AP-4). Adaptor protein complexes are vesicle coat components involved both in vesicle formation and cargo selection. They control the vesicular transport of proteins in different trafficking pathways. AP-4 forms a non clathrin-associated coat on vesicles departing the trans-Golgi network (TGN) and may be involved in the targeting of proteins from the trans-Golgi network (TGN) to the endosomal-lysosomal system. It is also involved in protein sorting to the basolateral membrane in epithelial cells and the proper asymmetric localization of somatodendritic proteins in neurons. AP-4 is involved in the recognition and binding of tyrosine-based sorting signals found in the cytoplasmic part of cargos, but may also recognize other types of sorting signal. The sequence is that of AP-4 complex subunit epsilon-1 from Mus musculus (Mouse).